The following is a 425-amino-acid chain: Dihydroorotase (425 aa).

Positions 61 and 63 each coordinate Zn(2+). Substrate-binding positions include 63–65 (HLR) and N95. Zn(2+) is bound by residues D153, H180, and H233. N279 contributes to the substrate binding site. D306 contributes to the Zn(2+) binding site. The active site involves D306. H310 is a binding site for substrate.

This sequence belongs to the metallo-dependent hydrolases superfamily. DHOase family. Class I DHOase subfamily. Zn(2+) is required as a cofactor.

The enzyme catalyses (S)-dihydroorotate + H2O = N-carbamoyl-L-aspartate + H(+). Its pathway is pyrimidine metabolism; UMP biosynthesis via de novo pathway; (S)-dihydroorotate from bicarbonate: step 3/3. Functionally, catalyzes the reversible cyclization of carbamoyl aspartate to dihydroorotate. This is Dihydroorotase from Geobacter sp. (strain M21).